The chain runs to 565 residues: Probable alpha-L-arabinofuranosidase A (565 aa).

An N-terminal signal peptide occupies residues 1 to 19 (MPLSAAIKSSLSVSVRADA). N71, N91, N128, N303, N362, N486, and N501 each carry an N-linked (GlcNAc...) asparagine glycan.

It belongs to the glycosyl hydrolase 51 family.

The protein localises to the secreted. It carries out the reaction Hydrolysis of terminal non-reducing alpha-L-arabinofuranoside residues in alpha-L-arabinosides.. Its pathway is glycan metabolism; L-arabinan degradation. Its function is as follows. Alpha-L-arabinofuranosidase involved in the degradation of arabinoxylan, a major component of plant hemicellulose. Acts only on small linear 1,5-alpha-linked L-arabinofuranosyl oligosaccharides. The polypeptide is Probable alpha-L-arabinofuranosidase A (abfA) (Emericella nidulans (strain FGSC A4 / ATCC 38163 / CBS 112.46 / NRRL 194 / M139) (Aspergillus nidulans)).